Here is an 83-residue protein sequence, read N- to C-terminus: Small ribosomal subunit protein bS16 (83 aa).

This sequence belongs to the bacterial ribosomal protein bS16 family.

This is Small ribosomal subunit protein bS16 from Shewanella baltica (strain OS223).